The chain runs to 151 residues: Putative phosphatidylglycerol/phosphatidylinositol transfer protein 1 (151 aa).

Positions 1–26 (MKHSKNQIVYITFFIIILIVVKPIES) are cleaved as a signal peptide.

Belongs to the NPC2 family. As to quaternary structure, monomer.

Catalyzes the intermembrane transfer of phosphatidylglycerol and phosphatidylinositol. The sequence is that of Putative phosphatidylglycerol/phosphatidylinositol transfer protein 1 from Dictyostelium discoideum (Social amoeba).